Here is a 372-residue protein sequence, read N- to C-terminus: Trehalose/maltose import ATP-binding protein MalK (372 aa).

The ABC transporter domain maps to 4–240 (VRLVDVWKVF…PANTFVAGFI (237 aa)). 36–43 (GPSGCGKT) is an ATP binding site.

The protein belongs to the ABC transporter superfamily. Maltose/trehalose importer (TC 3.A.1.1.7) family. Homodimer. The complex is composed of two ATP-binding proteins (MalK), two transmembrane proteins (MalG and MalF) and a solute-binding protein (MalE).

Its subcellular location is the cell membrane. The catalysed reaction is D-maltose(out) + ATP + H2O = D-maltose(in) + ADP + phosphate + H(+). Its activity is regulated as follows. Inhibited by N-ethylmaleimide but not by vanadate. Functionally, part of the ABC transporter complex MalEFGK involved in trehalose/maltose import. Responsible for energy coupling to the transport system. In Thermococcus litoralis (strain ATCC 51850 / DSM 5473 / JCM 8560 / NS-C), this protein is Trehalose/maltose import ATP-binding protein MalK (malK).